A 210-amino-acid polypeptide reads, in one-letter code: RNA chaperone ProQ (210 aa).

Composition is skewed to basic and acidic residues over residues 103–124 and 132–144; these read LKESKERVFASRRTNNKEEKAK and RKADAAAKSDKPK. The segment at 103–148 is disordered; sequence LKESKERVFASRRTNNKEEKAKQPRRPAPRKADAAAKSDKPKAAPK.

Belongs to the ProQ family.

It localises to the cytoplasm. RNA chaperone with significant RNA binding, RNA strand exchange and RNA duplexing activities. In Aeromonas salmonicida (strain A449), this protein is RNA chaperone ProQ.